The following is a 470-amino-acid chain: Nuclear receptor subfamily 0 group B member 1 (470 aa).

Repeat copies occupy residues 1–67, 68–133, and 134–200. Positions 1-253 are 4 X 67 AA tandem repeats; the sequence is MAGENHQWQG…RPVALKNPQV (253 aa). 3 short sequence motifs (LXXLL motif) span residues 13 to 17, 80 to 84, and 146 to 150; these read LYNML, LYSML, and LYSLL. Residues 201–253 form a 4; truncated repeat; sequence FCGEDHPQQGSTLYCMPTSTNQAQAAPEERPRAPWWDASSGALRPVALKNPQV. Positions 215 to 469 constitute an NR LBD domain; that stretch reads CMPTSTNQAQ…DMMLEMLCTK (255 aa). An AF-2 motif motif is present at residues 461 to 466; it reads MMLEML.

Belongs to the nuclear hormone receptor family. NR0 subfamily. Homodimer. Interacts with NR5A1, NR5A2, NR0B2 and with COPS2. Interacts with ESRRB; represses ESRRB activity at the GATA6 promoter.

It is found in the nucleus. The protein localises to the cytoplasm. Functionally, nuclear receptor that lacks a DNA-binding domain and acts as a corepressor that inhibits the transcriptional activity of other nuclear receptors through heterodimeric interactions. Component of a cascade required for the development of the hypothalamic-pituitary-adrenal-gonadal axis. May also have a role in the development of the embryo and in the maintenance of embryonic stem cell pluripotency. In Pongo pygmaeus (Bornean orangutan), this protein is Nuclear receptor subfamily 0 group B member 1 (NR0B1).